Consider the following 389-residue polypeptide: Putative 8-amino-7-oxononanoate synthase (389 aa).

Residue R22 coordinates substrate. A pyridoxal 5'-phosphate-binding site is contributed by 109–110 (GY). H134 is a substrate binding site. Pyridoxal 5'-phosphate contacts are provided by residues S182, 207–210 (DDAH), and 238–241 (TLSK). K241 bears the N6-(pyridoxal phosphate)lysine mark. Position 350 (T350) interacts with substrate.

It belongs to the class-II pyridoxal-phosphate-dependent aminotransferase family. BioF subfamily. As to quaternary structure, homodimer. The cofactor is pyridoxal 5'-phosphate.

The enzyme catalyses 6-carboxyhexanoyl-[ACP] + L-alanine + H(+) = (8S)-8-amino-7-oxononanoate + holo-[ACP] + CO2. The protein operates within cofactor biosynthesis; biotin biosynthesis. Functionally, catalyzes the decarboxylative condensation of pimeloyl-[acyl-carrier protein] and L-alanine to produce 8-amino-7-oxononanoate (AON), [acyl-carrier protein], and carbon dioxide. The sequence is that of Putative 8-amino-7-oxononanoate synthase (bioF) from Parvibaculum lavamentivorans (strain DS-1 / DSM 13023 / NCIMB 13966).